The chain runs to 456 residues: Bifunctional protein GlmU (456 aa).

The tract at residues 1-228 (MPQNTLNIVI…SHLAAGVNNK (228 aa)) is pyrophosphorylase. Residues 11-14 (LAAG), lysine 25, glutamine 75, 80-81 (GT), 102-104 (YGD), glycine 138, glutamate 153, asparagine 168, and asparagine 226 each bind UDP-N-acetyl-alpha-D-glucosamine. Aspartate 104 lines the Mg(2+) pocket. Mg(2+) is bound at residue asparagine 226. Residues 229-249 (LQLAELERIFQTEQAQELLKA) form a linker region. Residues 250-456 (GVTLRDPARF…GWVRPEKNKQ (207 aa)) form an N-acetyltransferase region. Positions 332 and 350 each coordinate UDP-N-acetyl-alpha-D-glucosamine. Residue histidine 362 is the Proton acceptor of the active site. Residues tyrosine 365 and asparagine 376 each contribute to the UDP-N-acetyl-alpha-D-glucosamine site. Residues alanine 379, 385 to 386 (NY), serine 404, alanine 422, and arginine 439 contribute to the acetyl-CoA site.

It in the N-terminal section; belongs to the N-acetylglucosamine-1-phosphate uridyltransferase family. The protein in the C-terminal section; belongs to the transferase hexapeptide repeat family. In terms of assembly, homotrimer. Mg(2+) serves as cofactor.

It localises to the cytoplasm. It carries out the reaction alpha-D-glucosamine 1-phosphate + acetyl-CoA = N-acetyl-alpha-D-glucosamine 1-phosphate + CoA + H(+). It catalyses the reaction N-acetyl-alpha-D-glucosamine 1-phosphate + UTP + H(+) = UDP-N-acetyl-alpha-D-glucosamine + diphosphate. It participates in nucleotide-sugar biosynthesis; UDP-N-acetyl-alpha-D-glucosamine biosynthesis; N-acetyl-alpha-D-glucosamine 1-phosphate from alpha-D-glucosamine 6-phosphate (route II): step 2/2. It functions in the pathway nucleotide-sugar biosynthesis; UDP-N-acetyl-alpha-D-glucosamine biosynthesis; UDP-N-acetyl-alpha-D-glucosamine from N-acetyl-alpha-D-glucosamine 1-phosphate: step 1/1. The protein operates within bacterial outer membrane biogenesis; LPS lipid A biosynthesis. Its function is as follows. Catalyzes the last two sequential reactions in the de novo biosynthetic pathway for UDP-N-acetylglucosamine (UDP-GlcNAc). The C-terminal domain catalyzes the transfer of acetyl group from acetyl coenzyme A to glucosamine-1-phosphate (GlcN-1-P) to produce N-acetylglucosamine-1-phosphate (GlcNAc-1-P), which is converted into UDP-GlcNAc by the transfer of uridine 5-monophosphate (from uridine 5-triphosphate), a reaction catalyzed by the N-terminal domain. In Neisseria meningitidis serogroup A / serotype 4A (strain DSM 15465 / Z2491), this protein is Bifunctional protein GlmU.